Reading from the N-terminus, the 538-residue chain is (R)-citramalate synthase (538 aa).

The region spanning 3 to 268 is the Pyruvate carboxyltransferase domain; the sequence is IKVYDTTLRD…IPKENLKKLF (266 aa).

Belongs to the alpha-IPM synthase/homocitrate synthase family.

It carries out the reaction pyruvate + acetyl-CoA + H2O = (3R)-citramalate + CoA + H(+). It participates in amino-acid biosynthesis; L-isoleucine biosynthesis; 2-oxobutanoate from pyruvate: step 1/3. In terms of biological role, catalyzes the condensation of pyruvate and acetyl-coenzyme A to form (R)-citramalate. The protein is (R)-citramalate synthase of Thermotoga maritima (strain ATCC 43589 / DSM 3109 / JCM 10099 / NBRC 100826 / MSB8).